We begin with the raw amino-acid sequence, 392 residues long: Chaperone protein DnaJ 2 (392 aa).

One can recognise a J domain in the interval Asp-10–Arg-75. The CR-type zinc-finger motif lies at Gly-161–Thr-239. 8 residues coordinate Zn(2+): Cys-174, Cys-177, Cys-191, Cys-194, Cys-213, Cys-216, Cys-227, and Cys-230. CXXCXGXG motif repeat units follow at residues Cys-174–Gly-181, Cys-191–Gly-198, Cys-213–Gly-220, and Cys-227–Gly-234.

It belongs to the DnaJ family. Homodimer. Requires Zn(2+) as cofactor.

The protein resides in the cytoplasm. Its function is as follows. Participates actively in the response to hyperosmotic and heat shock by preventing the aggregation of stress-denatured proteins and by disaggregating proteins, also in an autonomous, DnaK-independent fashion. Unfolded proteins bind initially to DnaJ; upon interaction with the DnaJ-bound protein, DnaK hydrolyzes its bound ATP, resulting in the formation of a stable complex. GrpE releases ADP from DnaK; ATP binding to DnaK triggers the release of the substrate protein, thus completing the reaction cycle. Several rounds of ATP-dependent interactions between DnaJ, DnaK and GrpE are required for fully efficient folding. Also involved, together with DnaK and GrpE, in the DNA replication of plasmids through activation of initiation proteins. The chain is Chaperone protein DnaJ 2 from Mycolicibacterium paratuberculosis (strain ATCC BAA-968 / K-10) (Mycobacterium paratuberculosis).